The primary structure comprises 458 residues: Transmembrane protein 143 (458 aa).

2 consecutive transmembrane segments (helical) span residues 277-297 and 298-318; these read LLNL…GMVI and LSDL…FMGV. Position 329 is a phosphoserine (Ser-329).

Its subcellular location is the membrane. The polypeptide is Transmembrane protein 143 (Tmem143) (Mus musculus (Mouse)).